The primary structure comprises 289 residues: ATP synthase mitochondrial F1 complex assembly factor 2 (289 aa).

A mitochondrion-targeting transit peptide spans 1-40; the sequence is MWRSCLRLRDGGRRLLNRPAGGPSASMSPGPTIPSPARAY. Residues 13–40 form a disordered region; sequence RRLLNRPAGGPSASMSPGPTIPSPARAY. An N6-succinyllysine modification is found at Lys-133.

Belongs to the ATP12 family. As to quaternary structure, interacts with ATP5F1B; involved in the assembly of the F1 component of the mitochondrial ATP synthase (ATPase). Interacts with FMC1. Widely expressed.

The protein resides in the mitochondrion inner membrane. Plays a role in the assembly of the F1 component of the mitochondrial ATP synthase (ATPase). The protein is ATP synthase mitochondrial F1 complex assembly factor 2 of Homo sapiens (Human).